The following is a 38-amino-acid chain: Large ribosomal subunit protein bL36 (38 aa).

It belongs to the bacterial ribosomal protein bL36 family.

The protein is Large ribosomal subunit protein bL36 of Gemmatimonas aurantiaca (strain DSM 14586 / JCM 11422 / NBRC 100505 / T-27).